Reading from the N-terminus, the 366-residue chain is Chorismate synthase (366 aa).

2 residues coordinate NADP(+): arginine 48 and arginine 54. Residues 125-127, 242-243, glycine 287, 302-306, and arginine 328 contribute to the FMN site; these read RSS, NA, and KPTSS.

It belongs to the chorismate synthase family. As to quaternary structure, homotetramer. The cofactor is FMNH2.

It catalyses the reaction 5-O-(1-carboxyvinyl)-3-phosphoshikimate = chorismate + phosphate. It participates in metabolic intermediate biosynthesis; chorismate biosynthesis; chorismate from D-erythrose 4-phosphate and phosphoenolpyruvate: step 7/7. Functionally, catalyzes the anti-1,4-elimination of the C-3 phosphate and the C-6 proR hydrogen from 5-enolpyruvylshikimate-3-phosphate (EPSP) to yield chorismate, which is the branch point compound that serves as the starting substrate for the three terminal pathways of aromatic amino acid biosynthesis. This reaction introduces a second double bond into the aromatic ring system. The sequence is that of Chorismate synthase from Rhodospirillum rubrum (strain ATCC 11170 / ATH 1.1.1 / DSM 467 / LMG 4362 / NCIMB 8255 / S1).